The following is a 261-amino-acid chain: 5'-nucleotidase SurE (261 aa).

A divalent metal cation-binding residues include Asp17, Asp18, Ser48, and Asn104.

This sequence belongs to the SurE nucleotidase family. A divalent metal cation is required as a cofactor.

The protein localises to the cytoplasm. The enzyme catalyses a ribonucleoside 5'-phosphate + H2O = a ribonucleoside + phosphate. Functionally, nucleotidase that shows phosphatase activity on nucleoside 5'-monophosphates. The chain is 5'-nucleotidase SurE from Deinococcus geothermalis (strain DSM 11300 / CIP 105573 / AG-3a).